The following is a 187-amino-acid chain: Ribosome hibernation promotion factor (187 aa).

It belongs to the HPF/YfiA ribosome-associated protein family. Long HPF subfamily. As to quaternary structure, interacts with 100S ribosomes.

It is found in the cytoplasm. In terms of biological role, involved in 100S ribosome formation from 70S ribosomes; 100S ribosomes are probably translationally inactive. Ribosome hibernation may be used by the cell to decrease overall energy consumption under nutrient-limiting conditions. Unlike E.coli, 100S ribosomes are present from mid-exponential growth, peak during the transition from log to stationary phase and then decrease. The polypeptide is Ribosome hibernation promotion factor (Listeria monocytogenes serotype 1/2a (strain 10403S)).